Reading from the N-terminus, the 94-residue chain is CRISPR-associated endoribonuclease Cas2 (94 aa).

The protein belongs to the CRISPR-associated endoribonuclease Cas2 protein family. E.coli-subtype subfamily. In terms of assembly, homodimer. Part of the Cas1-Cas2 complex. Forms a hexamer with 2 Cas1 dimers sandwiching a Cas2 dimer. The DNA lies across a flat surface extending from 1 Cas1 dimer, across the Cas2 dimer and contacting the other Cas1 dimer. Only 1 Cas1 protein from each dimer is catalytic, the other interacts with the Cas2 dimer and possibly target DNA.

Functionally, CRISPR (clustered regularly interspaced short palindromic repeat), is an adaptive immune system that provides protection against mobile genetic elements (viruses, transposable elements and conjugative plasmids). CRISPR clusters contain sequences complementary to antecedent mobile elements and target invading nucleic acids. CRISPR clusters are transcribed and processed into CRISPR RNA (crRNA). The Cas1-Cas2 complex is involved in CRISPR adaptation, the first stage of CRISPR immunity, being required for the addition/removal of CRISPR spacers at the leader end of the CRISPR locus. The Cas1-Cas2 complex introduces staggered nicks into both strands of the CRISPR array near the leader repeat and joins the 5'-ends of the repeat strands with the 3'-ends of the new spacer sequence. Spacer DNA integration requires supercoiled target DNA and 3'-OH ends on the inserted (spacer) DNA and probably initiates with a nucleophilic attack of the C 3'-OH end of the protospacer on the minus strand of the first repeat sequence. Expression of Cas1-Cas2 in a strain lacking both genes permits spacer acquisition. Cas2 not seen to bind DNA alone; the Cas1-Cas2 complex preferentially binds CRISPR-locus DNA. Highest binding is seen to a dual forked DNA complex with 3'-overhangs and a protospacer-adjacent motif-complement specifically positioned. The protospacer DNA lies across a flat surface extending from 1 Cas1 dimer, across the Cas2 dimer and contacting the other Cas1 dimer; the 23 bp-long ds section of the DNA is bracketed by 1 Tyr-22 from each of the Cas1 dimers. Cas1 cuts within the 3'-overhang, to generate a 33-nucleotide DNA that is probably incorporated into the CRISPR leader by a cut-and-paste mechanism. This subunit's probable nuclease activity is not required for spacer acquisition. In Escherichia coli (strain K12), this protein is CRISPR-associated endoribonuclease Cas2 (ygbF).